The chain runs to 360 residues: Phospho-N-acetylmuramoyl-pentapeptide-transferase (360 aa).

The next 10 helical transmembrane spans lie at 26-46 (AILA…KLIE), 74-94 (MGGL…GDLG), 97-117 (YVWV…IDDY), 132-152 (WKYI…FYST), 168-188 (ILPQ…VGAS), 199-219 (GLAI…AYLS), 236-256 (SGEL…FLWF), 263-283 (VFMG…IAVL), 288-308 (ILLV…ILQV), and 338-358 (VIVR…ATLK).

This sequence belongs to the glycosyltransferase 4 family. MraY subfamily. The cofactor is Mg(2+).

It localises to the cell inner membrane. The enzyme catalyses UDP-N-acetyl-alpha-D-muramoyl-L-alanyl-gamma-D-glutamyl-meso-2,6-diaminopimeloyl-D-alanyl-D-alanine + di-trans,octa-cis-undecaprenyl phosphate = di-trans,octa-cis-undecaprenyl diphospho-N-acetyl-alpha-D-muramoyl-L-alanyl-D-glutamyl-meso-2,6-diaminopimeloyl-D-alanyl-D-alanine + UMP. It functions in the pathway cell wall biogenesis; peptidoglycan biosynthesis. Its function is as follows. Catalyzes the initial step of the lipid cycle reactions in the biosynthesis of the cell wall peptidoglycan: transfers peptidoglycan precursor phospho-MurNAc-pentapeptide from UDP-MurNAc-pentapeptide onto the lipid carrier undecaprenyl phosphate, yielding undecaprenyl-pyrophosphoryl-MurNAc-pentapeptide, known as lipid I. This chain is Phospho-N-acetylmuramoyl-pentapeptide-transferase, found in Shewanella amazonensis (strain ATCC BAA-1098 / SB2B).